Reading from the N-terminus, the 257-residue chain is Small ribosomal subunit protein uS15m (257 aa).

The N-terminal 57 residues, 1-57 (MLRAAWRALSSVRVQAVTQAPVPALRARSSASLPSARCGLQTPSLLNAARAYAVQKP), are a transit peptide targeting the mitochondrion. The disordered stretch occupies residues 228 to 257 (KAAAAAAKKEKRERVPENPSNALPEKTKEN). Positions 234 to 243 (AKKEKRERVP) are enriched in basic and acidic residues.

It belongs to the universal ribosomal protein uS15 family. In terms of assembly, component of the mitochondrial ribosome small subunit (28S) which comprises a 12S rRNA and about 30 distinct proteins. Interacts with METTL17.

It is found in the mitochondrion matrix. This chain is Small ribosomal subunit protein uS15m (Mrps15), found in Rattus norvegicus (Rat).